A 243-amino-acid polypeptide reads, in one-letter code: UPF0702 transmembrane protein YkjA (243 aa).

Helical transmembrane passes span 3–23 (WMVWVFLLKPVIVFSIAYILF), 34–54 (MNNFDLLLTFAIGTIISEPIL), and 58–78 (LPMSIYYAGAFLVLYLIMSKL).

It belongs to the UPF0702 family.

The protein resides in the cell membrane. The polypeptide is UPF0702 transmembrane protein YkjA (ykjA) (Bacillus subtilis (strain 168)).